We begin with the raw amino-acid sequence, 1516 residues long: AP-4 complex accessory subunit RUSC2 (1516 aa).

Disordered regions lie at residues 33–105 (AGGG…PFLL), 202–224 (LDECGGPGGSGSGGGASDTSGFS), 229–248 (WKLSSDESPRNPGCSGSGDQ), 331–351 (SKMSYESHHPESGGREGGYGC), 404–445 (LSSQ…PSEY), and 478–511 (GQVYTNTSPPNLSTGRQRSRSYDRSLQRSPPVRL). Polar residues predominate over residues 66-81 (LFSSLHSTPGGTARSI). A compositionally biased stretch (basic and acidic residues) spans 82-92 (DSTKSRSRDGR). Residues 206–217 (GGPGGSGSGGGA) show a composition bias toward gly residues. Residues 333 to 344 (MSYESHHPESGG) show a composition bias toward basic and acidic residues. The segment covering 405 to 420 (SSQSSPSPAGSSITSC) has biased composition (low complexity). The span at 428–440 (SPPPGPGPDPGPS) shows a compositional bias: pro residues. Residues 480–493 (VYTNTSPPNLSTGR) are compositionally biased toward polar residues. Phosphoserine occurs at positions 536, 543, and 559. Disordered stretches follow at residues 550–588 (GRKKTGGSGSPPLRVSVGDSSQEFSPIQEAQQDRGAPLD), 646–688 (LMDP…KEQR), 727–836 (RTQQ…PQKE), and 868–889 (ESLARGGGEGSMATRPSNANHL). Positions 567 to 579 (GDSSQEFSPIQEA) are enriched in polar residues. Ser656 is subject to Phosphoserine. The segment covering 729 to 746 (QQPAPLAAPAAQVSVPAP) has biased composition (low complexity). Position 781 is a phosphoserine (Ser781). Low complexity predominate over residues 791-801 (PSTDSSASTSC). The region spanning 1031-1175 (NVGHLVLKYL…LPFSLDLLFQ (145 aa)) is the RUN domain. Disordered regions lie at residues 1210 to 1261 (RARG…GRAR), 1286 to 1408 (IEGS…LPSD), and 1422 to 1449 (QTVGSRREPEPKESLQEPHSPALPSSPP). Positions 1219–1230 (DVDRAAQGERVK) are enriched in basic and acidic residues. Over residues 1237–1251 (GGEEEEEEEETEEVA) the composition is skewed to acidic residues. Residues 1355 to 1364 (ELRRSREREG) are compositionally biased toward basic and acidic residues. 2 positions are modified to phosphoserine: Ser1368 and Ser1380. Residues 1426-1437 (SRREPEPKESLQ) show a composition bias toward basic and acidic residues. Positions 1447–1506 (SPPCEVQALCHHLATGPGQLSFHKGDILRVLGRAGGDWLRCSRGPDSGLVPLAYVTLTPT) constitute an SH3 domain.

Associated component of the adapter-like complex 4 (AP-4). Interacts with active RAB1A and RAB1B, and with GOLGA2. Interacts (via RUN domain) with RAB35 (GTP-bound form); the interaction recruits RUSC2 to the plasma membrane. As to expression, widely expressed, with highest levels in brain and testis.

It is found in the cytoplasm. The protein localises to the cytosol. The protein resides in the cell membrane. Associates with the adapter-like complex 4 (AP-4) and may therefore play a role in vesicular trafficking of proteins at the trans-Golgi network. The sequence is that of AP-4 complex accessory subunit RUSC2 from Homo sapiens (Human).